A 109-amino-acid polypeptide reads, in one-letter code: Oncomodulin (109 aa).

S2 is modified (N-acetylserine). EF-hand domains follow at residues 39 to 74 (MSAS…FQSD) and 78 to 109 (LTES…MVHS). Ca(2+)-binding residues include D52, D54, S56, Y58, E63, D91, D93, D95, K97, and E102.

It belongs to the parvalbumin family. As to expression, found in tumor tissues and not detected in normal tissues.

Functionally, has some calmodulin-like activity with respect to enzyme activation and growth regulation. Binds two calcium ions. This is Oncomodulin (Ocm) from Rattus norvegicus (Rat).